The following is a 111-amino-acid chain: Nucleoid-associated protein PputW619_3586 (111 aa).

A disordered region spans residues 87–111; the sequence is EQSSQEKMGGMTAGMQLPPGFKMPF.

Belongs to the YbaB/EbfC family. As to quaternary structure, homodimer.

It is found in the cytoplasm. The protein resides in the nucleoid. Binds to DNA and alters its conformation. May be involved in regulation of gene expression, nucleoid organization and DNA protection. The polypeptide is Nucleoid-associated protein PputW619_3586 (Pseudomonas putida (strain W619)).